The sequence spans 457 residues: Bifunctional protein GlmU (457 aa).

A pyrophosphorylase region spans residues M1–R230. UDP-N-acetyl-alpha-D-glucosamine contacts are provided by residues L9–G12, K23, Q73, and G78–T79. Position 103 (D103) interacts with Mg(2+). UDP-N-acetyl-alpha-D-glucosamine-binding residues include G140, E155, N170, and N228. Mg(2+) is bound at residue N228. The linker stretch occupies residues I231–N251. The interval G252–K457 is N-acetyltransferase. UDP-N-acetyl-alpha-D-glucosamine is bound by residues R333 and K351. H363 (proton acceptor) is an active-site residue. 2 residues coordinate UDP-N-acetyl-alpha-D-glucosamine: Y366 and N377. Acetyl-CoA-binding positions include N386–Y387, A423, and R440.

In the N-terminal section; belongs to the N-acetylglucosamine-1-phosphate uridyltransferase family. It in the C-terminal section; belongs to the transferase hexapeptide repeat family. As to quaternary structure, homotrimer. It depends on Mg(2+) as a cofactor.

The protein localises to the cytoplasm. The enzyme catalyses alpha-D-glucosamine 1-phosphate + acetyl-CoA = N-acetyl-alpha-D-glucosamine 1-phosphate + CoA + H(+). It catalyses the reaction N-acetyl-alpha-D-glucosamine 1-phosphate + UTP + H(+) = UDP-N-acetyl-alpha-D-glucosamine + diphosphate. It participates in nucleotide-sugar biosynthesis; UDP-N-acetyl-alpha-D-glucosamine biosynthesis; N-acetyl-alpha-D-glucosamine 1-phosphate from alpha-D-glucosamine 6-phosphate (route II): step 2/2. The protein operates within nucleotide-sugar biosynthesis; UDP-N-acetyl-alpha-D-glucosamine biosynthesis; UDP-N-acetyl-alpha-D-glucosamine from N-acetyl-alpha-D-glucosamine 1-phosphate: step 1/1. It functions in the pathway bacterial outer membrane biogenesis; LPS lipid A biosynthesis. In terms of biological role, catalyzes the last two sequential reactions in the de novo biosynthetic pathway for UDP-N-acetylglucosamine (UDP-GlcNAc). The C-terminal domain catalyzes the transfer of acetyl group from acetyl coenzyme A to glucosamine-1-phosphate (GlcN-1-P) to produce N-acetylglucosamine-1-phosphate (GlcNAc-1-P), which is converted into UDP-GlcNAc by the transfer of uridine 5-monophosphate (from uridine 5-triphosphate), a reaction catalyzed by the N-terminal domain. The protein is Bifunctional protein GlmU of Listeria innocua serovar 6a (strain ATCC BAA-680 / CLIP 11262).